We begin with the raw amino-acid sequence, 410 residues long: Dihydrolipoyllysine-residue acetyltransferase component of pyruvate dehydrogenase complex (410 aa).

The Lipoyl-binding domain occupies 1-69 (MPDIGTDLVE…TTGSLIAILN (69 aa)). Residue Lys-35 is modified to N6-lipoyllysine. The disordered stretch occupies residues 81–100 (SSSYSFKNSKNTSTNSNLGN). In terms of domain architecture, Peripheral subunit-binding (PSBD) spans 113-150 (HATPTVRRLARKFDIKLENITGTGRKGRILKEDVISYK). Residue His-383 is part of the active site.

The protein belongs to the 2-oxoacid dehydrogenase family. In terms of assembly, forms a 24-polypeptide structural core with octahedral symmetry. The cofactor is (R)-lipoate.

The enzyme catalyses N(6)-[(R)-dihydrolipoyl]-L-lysyl-[protein] + acetyl-CoA = N(6)-[(R)-S(8)-acetyldihydrolipoyl]-L-lysyl-[protein] + CoA. In terms of biological role, the pyruvate dehydrogenase complex catalyzes the overall conversion of pyruvate to acetyl-CoA and CO(2). It contains multiple copies of three enzymatic components: pyruvate dehydrogenase (E1), dihydrolipoamide acetyltransferase (E2) and lipoamide dehydrogenase (E3). In Buchnera aphidicola subsp. Baizongia pistaciae (strain Bp), this protein is Dihydrolipoyllysine-residue acetyltransferase component of pyruvate dehydrogenase complex (aceF).